We begin with the raw amino-acid sequence, 158 residues long: MTDSKTEAAFKPVELYTDGACSGNPGPGGWAFVLRCPRTLKEIQRSGGQPHTTNNQMELMAVIRGLEALKEPCAVDLYSDSKYVGQGMSSWMAGWKSRGWKRKDGSKLVPVKNVELWQELDQQMQAHRVTYHHVKGHAGHTENELCDKLAVAAYQQYL.

Residues 9–155 (AFKPVELYTD…CDKLAVAAYQ (147 aa)) enclose the RNase H type-1 domain. Residues aspartate 18, glutamate 58, aspartate 80, and aspartate 147 each contribute to the Mg(2+) site.

The protein belongs to the RNase H family. In terms of assembly, monomer. Mg(2+) serves as cofactor.

It localises to the cytoplasm. The catalysed reaction is Endonucleolytic cleavage to 5'-phosphomonoester.. Its function is as follows. Endonuclease that specifically degrades the RNA of RNA-DNA hybrids. The protein is Ribonuclease H of Rhodopirellula baltica (strain DSM 10527 / NCIMB 13988 / SH1).